Here is a 356-residue protein sequence, read N- to C-terminus: Nicotinate-nucleotide--dimethylbenzimidazole phosphoribosyltransferase (356 aa).

The Proton acceptor role is filled by E317.

Belongs to the CobT family. In terms of assembly, homodimer.

The catalysed reaction is 5,6-dimethylbenzimidazole + nicotinate beta-D-ribonucleotide = alpha-ribazole 5'-phosphate + nicotinate + H(+). It functions in the pathway nucleoside biosynthesis; alpha-ribazole biosynthesis; alpha-ribazole from 5,6-dimethylbenzimidazole: step 1/2. In terms of biological role, catalyzes the synthesis of alpha-ribazole-5'-phosphate from nicotinate mononucleotide (NAMN) and 5,6-dimethylbenzimidazole (DMB). In Salmonella dublin (strain CT_02021853), this protein is Nicotinate-nucleotide--dimethylbenzimidazole phosphoribosyltransferase.